The chain runs to 332 residues: GLIPR1-like protein 2 (332 aa).

Residues 57-191 (LHNELRGTVF…THAALFICNY (135 aa)) form the SCP domain. The N-linked (GlcNAc...) asparagine glycan is linked to N145. A helical membrane pass occupies residues 253 to 273 (IFILFLRVASLLLCVIVVLIV). Residues 293–332 (EGKTEVEIVMEEGEGEGEGGEGEGEGEEKEEEEMLEEDEQ) are disordered. Residues 300–332 (IVMEEGEGEGEGGEGEGEGEEKEEEEMLEEDEQ) show a composition bias toward acidic residues.

Belongs to the CRISP family.

Its subcellular location is the membrane. The chain is GLIPR1-like protein 2 (Glipr1l2) from Mus musculus (Mouse).